Reading from the N-terminus, the 132-residue chain is Large ribosomal subunit protein bL17 (132 aa).

Belongs to the bacterial ribosomal protein bL17 family. In terms of assembly, part of the 50S ribosomal subunit. Contacts protein L32.

This is Large ribosomal subunit protein bL17 from Shewanella woodyi (strain ATCC 51908 / MS32).